The chain runs to 886 residues: Cadherin-1 (886 aa).

The signal sequence occupies residues 1 to 23 (MGARCRSFSALLLLLQVSSWLCQ). A propeptide spanning residues 24–158 (QPESESDSCR…FHQGLRRQKR (135 aa)) is cleaved from the precursor. The Extracellular segment spans residues 24-713 (QPESESDSCR…SLEAGLQVPA (690 aa)). 5 Cadherin domains span residues 159–266 (DWVI…RPEF), 267–379 (IQEV…APIF), 380–490 (NPST…APIF), 491–597 (VPAE…DNAP), and 598–701 (IPEP…NCMK). Residue Asp-261 coordinates Ca(2+). O-linked (Man...) serine glycans are attached at residues Ser-284 and Ser-289. Residue Asp-292 participates in Ca(2+) binding. Thr-362, Thr-474, Thr-476, and Thr-513 each carry an O-linked (Man...) threonine glycan. Residue Asn-562 is glycosylated (N-linked (GlcNAc...) asparagine). 3 O-linked (Man...) threonine glycosylation sites follow: Thr-580, Thr-582, and Thr-584. Residue Asn-641 is glycosylated (N-linked (GlcNAc...) asparagine). A helical transmembrane segment spans residues 714 to 734 (ILGILGGILALLILILLLLLF). The Cytoplasmic portion of the chain corresponds to 735 to 886 (LRRRTVVKEP…ADMYGGGEED (152 aa)). The interval 751–771 (DTRDNVYYYDEEGGGEEDQDF) is disordered. Phosphotyrosine; by SRC occurs at positions 757, 758, and 759. Residues 759 to 771 (YDEEGGGEEDQDF) show a composition bias toward acidic residues. Positions 762-773 (EGGGEEDQDFDL) are required for binding CTNND1 and PSEN1. Ser-774, Ser-797, Ser-842, Ser-844, and Ser-850 each carry phosphoserine. A required for binding alpha, beta and region spans residues 815-886 (IDENLKAADS…ADMYGGGEED (72 aa)).

In terms of assembly, homodimer; disulfide-linked. Component of an E-cadherin/ catenin adhesion complex composed of at least E-cadherin/CDH1, beta-catenin/CTNNB1 or gamma-catenin/JUP, and potentially alpha-catenin/CTNNA1; the complex is located to adherens junctions. Found in a complex composed of CDH1, RAP1A and PKP3; PKP3 acts as a scaffold protein within the complex, the complex is required for CDH1 localization to mature desmosome cell junctions. Interacts with the TRPV4 and CTNNB1 complex. Interacts with CTNND1. The stable association of CTNNA1 is controversial as CTNNA1 was shown not to bind to F-actin when assembled in the complex. Alternatively, the CTNNA1-containing complex may be linked to F-actin by other proteins such as LIMA1. Interaction with PSEN1, cleaves CDH1 resulting in the disassociation of cadherin-based adherens junctions (CAJs). Interacts with AJAP1 and DLGAP5. Interacts with TBC1D2. Interacts with LIMA1. Interacts with CAV1. Interacts with PIP5K1C. Interacts with DDR1; this stabilizes CDH1 at the cell surface and inhibits its internalization. Interacts with RAPGEF2. Interacts with RAB8B. Interacts with KLRG1. Forms a ternary complex composed of ADAM10, CADH1 and EPHA4; within the complex, CADH1 is cleaved by ADAM10 which disrupts adherens junctions. Interacts with SPEF1. Interacts with CTNNB1 and PKP2. Interacts with AMOTL2; the interaction may facilitate binding of radial actin fibers to cell junction complexes. Interacts with DSG3; the interaction is required for CDH1 localization to developing adherens junctions. During apoptosis or with calcium influx, cleaved by a membrane-bound metalloproteinase (ADAM10), PS1/gamma-secretase and caspase-3. Processing by the metalloproteinase, induced by calcium influx, causes disruption of cell-cell adhesion and the subsequent release of beta-catenin into the cytoplasm. The residual membrane-tethered cleavage product is rapidly degraded via an intracellular proteolytic pathway. Cleavage by caspase-3 releases the cytoplasmic tail resulting in disintegration of the actin microfilament system. The gamma-secretase-mediated cleavage promotes disassembly of adherens junctions. During development of the cochlear organ of Corti, cleavage by ADAM10 at adherens junctions promotes pillar cell separation. Post-translationally, N-glycosylation at Asn-641 is essential for expression, folding and trafficking. Addition of bisecting N-acetylglucosamine by MGAT3 modulates its cell membrane location. In terms of processing, ubiquitinated by a SCF complex containing SKP2, which requires prior phosphorylation by CK1/CSNK1A1. Ubiquitinated by CBLL1/HAKAI, requires prior phosphorylation at Tyr-758. O-glycosylated. O-manosylated by TMTC1, TMTC2, TMTC3 or TMTC4. Ser-289 and Thr-513 are O-manosylated by TMTC2 or TMTC4 but not TMTC1 or TMTC3.

It is found in the cell junction. Its subcellular location is the adherens junction. The protein localises to the cell membrane. It localises to the endosome. The protein resides in the golgi apparatus. It is found in the trans-Golgi network. Its subcellular location is the cytoplasm. The protein localises to the desmosome. Cadherins are calcium-dependent cell adhesion proteins. They preferentially interact with themselves in a homophilic manner in connecting cells; cadherins may thus contribute to the sorting of heterogeneous cell types. CDH1 is involved in mechanisms regulating cell-cell adhesions, mobility and proliferation of epithelial cells. Promotes organization of radial actin fiber structure and cellular response to contractile forces, via its interaction with AMOTL2 which facilitates anchoring of radial actin fibers to CDH1 junction complexes at the cell membrane. Plays a role in the early stages of desmosome cell-cell junction formation via facilitating the recruitment of DSG2 and DSP to desmosome plaques. Has a potent invasive suppressor role. It is a ligand for integrin alpha-E/beta-7. Its function is as follows. E-Cad/CTF2 promotes non-amyloidogenic degradation of Abeta precursors. Has a strong inhibitory effect on APP C99 and C83 production. This Rattus norvegicus (Rat) protein is Cadherin-1 (Cdh1).